Here is a 118-residue protein sequence, read N- to C-terminus: Late cornified envelope protein 1E (118 aa).

Low complexity predominate over residues 1–10; the sequence is MSCQQSQQQC. 2 disordered regions span residues 1–23 and 84–118; these read MSCQ…CPPK and RSHR…GGCC. Pro residues predominate over residues 11–23; the sequence is QPPPKCTPKCPPK. Over residues 92 to 103 the composition is skewed to low complexity; it reads SSDCCSQPSGGS. Over residues 104–118 the composition is skewed to gly residues; it reads SCCGGGSGQHSGGCC.

It belongs to the LCE family. As to quaternary structure, interacts with CYSRT1. Skin-specific. Expression was readily detected in adult trunk skin, adult arm skin, fetal skin, penal skin, vulva, esophagus and tongue. Not expressed in the cervix, rectum, lung, colon, or placenta.

Precursors of the cornified envelope of the stratum corneum. The chain is Late cornified envelope protein 1E (LCE1E) from Homo sapiens (Human).